A 156-amino-acid chain; its full sequence is Glutamine--fructose-6-phosphate aminotransferase [isomerizing] (156 aa).

The region spanning 4–146 (MAHHIVPARD…VLKGTDVDQP (143 aa)) is the SIS domain. Catalysis depends on K151, which acts as the For Fru-6P isomerization activity.

Homodimer.

It localises to the cytoplasm. It catalyses the reaction D-fructose 6-phosphate + L-glutamine = D-glucosamine 6-phosphate + L-glutamate. Functionally, catalyzes the first step in hexosamine metabolism, converting fructose-6P into glucosamine-6P using glutamine as a nitrogen source. The protein is Glutamine--fructose-6-phosphate aminotransferase [isomerizing] (glmS) of Sphingobium yanoikuyae (Sphingomonas yanoikuyae).